The chain runs to 435 residues: Transmembrane protein 130 (435 aa).

The N-terminal stretch at 1–24 is a signal peptide; that stretch reads MAQAVWSRLGRILWLACLLPWAPA. Topologically, residues 25–339 are extracellular; it reads GVAAGLYELN…IQVWPSRIQP (315 aa). N-linked (GlcNAc...) asparagine glycans are attached at residues N34, N197, and N300. The region spanning 147–233 is the PKD domain; it reads WPSSYLTKTV…AVKQKTGDFS (87 aa). Residues 340–360 traverse the membrane as a helical segment; it reads AVFAFPCATLITVMLAFIMYM. Residues 361–435 are Cytoplasmic-facing; that stretch reads TLRNATQQKD…LYKSVKTYTV (75 aa).

It is found in the golgi apparatus membrane. The protein is Transmembrane protein 130 (TMEM130) of Homo sapiens (Human).